A 282-amino-acid polypeptide reads, in one-letter code: Phosphatidylglycerol--prolipoprotein diacylglyceryl transferase (282 aa).

3 helical membrane-spanning segments follow: residues 19 to 39 (IGPFAIRWYALAYICGIVFGW), 58 to 78 (ISLVQVDDFILWVTLGIILGG), and 104 to 124 (GGMSFHGGFLGCVVAVMWFAY). A 1,2-diacyl-sn-glycero-3-phospho-(1'-sn-glycerol) is bound at residue R149. Helical transmembrane passes span 190-210 (AGMEGILLFTVLAIMIRLGAL), 214-234 (GMILGAFILIYGLTRIAGEHF), and 250-270 (MGMLLSIPMLIVGLILIVLAI).

This sequence belongs to the Lgt family.

The protein resides in the cell inner membrane. It catalyses the reaction L-cysteinyl-[prolipoprotein] + a 1,2-diacyl-sn-glycero-3-phospho-(1'-sn-glycerol) = an S-1,2-diacyl-sn-glyceryl-L-cysteinyl-[prolipoprotein] + sn-glycerol 1-phosphate + H(+). Its pathway is protein modification; lipoprotein biosynthesis (diacylglyceryl transfer). Catalyzes the transfer of the diacylglyceryl group from phosphatidylglycerol to the sulfhydryl group of the N-terminal cysteine of a prolipoprotein, the first step in the formation of mature lipoproteins. The polypeptide is Phosphatidylglycerol--prolipoprotein diacylglyceryl transferase (Bradyrhizobium diazoefficiens (strain JCM 10833 / BCRC 13528 / IAM 13628 / NBRC 14792 / USDA 110)).